The chain runs to 316 residues: Acetyl-coenzyme A carboxylase carboxyl transferase subunit alpha (316 aa).

The CoA carboxyltransferase C-terminal domain occupies 36–290 (PLRTQLETLR…GSVISRHLDD (255 aa)).

It belongs to the AccA family. In terms of assembly, acetyl-CoA carboxylase is a heterohexamer composed of biotin carboxyl carrier protein (AccB), biotin carboxylase (AccC) and two subunits each of ACCase subunit alpha (AccA) and ACCase subunit beta (AccD).

It is found in the cytoplasm. It catalyses the reaction N(6)-carboxybiotinyl-L-lysyl-[protein] + acetyl-CoA = N(6)-biotinyl-L-lysyl-[protein] + malonyl-CoA. Its pathway is lipid metabolism; malonyl-CoA biosynthesis; malonyl-CoA from acetyl-CoA: step 1/1. Its function is as follows. Component of the acetyl coenzyme A carboxylase (ACC) complex. First, biotin carboxylase catalyzes the carboxylation of biotin on its carrier protein (BCCP) and then the CO(2) group is transferred by the carboxyltransferase to acetyl-CoA to form malonyl-CoA. The chain is Acetyl-coenzyme A carboxylase carboxyl transferase subunit alpha from Deinococcus radiodurans (strain ATCC 13939 / DSM 20539 / JCM 16871 / CCUG 27074 / LMG 4051 / NBRC 15346 / NCIMB 9279 / VKM B-1422 / R1).